The following is a 569-amino-acid chain: Glutamyl-tRNA reductase (569 aa).

Residues 49–52 (TCNR), S109, 114–116 (EGQ), and Q120 contribute to the substrate site. The Nucleophile role is filled by C50. Residue 192–197 (GAGSMS) coordinates NADP(+). The tract at residues 284-397 (PVAVREETPA…VEAPRPAPAL (114 aa)) is insert. The disordered stretch occupies residues 546–569 (AAVSRADDRDTSDSTENAKNRGRE). Residues 550 to 569 (RADDRDTSDSTENAKNRGRE) show a composition bias toward basic and acidic residues.

Belongs to the glutamyl-tRNA reductase family. Homodimer.

The catalysed reaction is (S)-4-amino-5-oxopentanoate + tRNA(Glu) + NADP(+) = L-glutamyl-tRNA(Glu) + NADPH + H(+). It participates in porphyrin-containing compound metabolism; protoporphyrin-IX biosynthesis; 5-aminolevulinate from L-glutamyl-tRNA(Glu): step 1/2. Functionally, catalyzes the NADPH-dependent reduction of glutamyl-tRNA(Glu) to glutamate 1-semialdehyde (GSA). The chain is Glutamyl-tRNA reductase from Streptomyces avermitilis (strain ATCC 31267 / DSM 46492 / JCM 5070 / NBRC 14893 / NCIMB 12804 / NRRL 8165 / MA-4680).